Consider the following 311-residue polypeptide: Transcriptional repressor scratch 2 (311 aa).

The tract at residues 1–20 (MPRSFLVKKIKADGFQCSGV) is SNAG domain. Disordered regions lie at residues 71–90 (PAYPAAASEEYSDPESPQSS) and 120–156 (RRRAGAGGDAAGAGDAGGGGGGGGGGERAGRSGATAG). Positions 124 to 146 (GAGGDAAGAGDAGGGGGGGGGGE) are enriched in gly residues. C2H2-type zinc fingers lie at residues 161 to 183 (HACAECGKTYATSSNLSRHKQTH), 192 to 214 (RKCPTCGKAYVSMPALAMHVLTH), 218 to 240 (HKCGVCGKAFSRPWLLQGHMRSH), and 246 to 268 (FGCAHCGKAFADRSNLRAHMQTH). Residues 274-297 (YRCRQCDKSFALKSYLHKHCEAAC) form a C2H2-type 5; atypical zinc finger.

It belongs to the snail C2H2-type zinc-finger protein family.

The protein localises to the nucleus. May be involved in transcriptional regulation. This Mus musculus (Mouse) protein is Transcriptional repressor scratch 2 (Scrt2).